Reading from the N-terminus, the 491-residue chain is Ribosome biogenesis protein YTM1 (491 aa).

A ubiquitin-like (UBL) domain region spans residues 8-103 (IKIKFTTNES…EAFLTIEYTR (96 aa)). The sufficient for interaction with ERB1 and association with 66S pre-ribosomes stretch occupies residues 113–491 (SFQNDDWISS…QINKGSDISK (379 aa)). 7 WD repeats span residues 128–167 (RNLSAVTSSQLTITNPKILSGSYDGIVKTYNMSGKVEKQY), 169–207 (GHSAAVKSVKWISPTRIVSCGNDQQVRLWKTAYEGVVDQ), 241–280 (GHKAPVVDLAVNQQTKRILSAGYDLNVGFWSTNYKDMAKI), 318–358 (GHTE…CVDT), 360–399 (TTGFSLLSILQLPQVNLIATGSSARHINLHDPRVSASNTN), 409–449 (GHTN…SLYT), and 456–491 (STKSKIFGVCWDSEIGLISGGEDKRVQINKGSDISK). The tract at residues 205 to 228 (VDQNEEDEEENEANEGDDGDNDME) is disordered. The segment covering 207-225 (QNEEDEEENEANEGDDGDN) has biased composition (acidic residues).

The protein belongs to the WD repeat WDR12/YTM1 family. Component of the NOP7 complex, composed of ERB1, NOP7 and YTM1. The complex is held together by ERB1, which interacts with NOP7 via its N-terminal domain and with YTM1 via a high-affinity interaction between the seven-bladed beta-propeller domains of the 2 proteins. The NOP7 complex associates with the 66S pre-ribosome. Interacts (via UBL domain) with MDN1 (via VWFA/MIDAS domain).

It is found in the nucleus. Its subcellular location is the nucleolus. It localises to the nucleoplasm. Functionally, component of the NOP7 complex, which is required for maturation of the 25S and 5.8S ribosomal RNAs and formation of the 60S ribosome. This Lodderomyces elongisporus (strain ATCC 11503 / CBS 2605 / JCM 1781 / NBRC 1676 / NRRL YB-4239) (Yeast) protein is Ribosome biogenesis protein YTM1.